The sequence spans 210 residues: Cilia- and flagella-associated protein 418 (210 aa).

A required for interaction with FAM161A region spans residues 1–77; the sequence is MAKDLDELLD…LINEIFEEPN (77 aa). Positions 24–59 are disordered; that stretch reads LDLGERPKGGSGGGGTHSGDRNGAQEKDTLRSTETF. Residues 41–59 show a composition bias toward basic and acidic residues; sequence SGDRNGAQEKDTLRSTETF.

Interacts (via N-terminus) with FAM161A (via central region); the interaction is direct.

It localises to the cytoplasm. The protein resides in the photoreceptor inner segment. May be involved in photoreceptor outer segment disk morphogenesis. The polypeptide is Cilia- and flagella-associated protein 418 (Rattus norvegicus (Rat)).